The chain runs to 673 residues: eEF1A lysine and N-terminal methyltransferase homolog (673 aa).

The protein belongs to the methyltransferase superfamily.

The catalysed reaction is L-lysyl-[protein] + S-adenosyl-L-methionine = N(6)-methyl-L-lysyl-[protein] + S-adenosyl-L-homocysteine + H(+). The enzyme catalyses N(6)-methyl-L-lysyl-[protein] + S-adenosyl-L-methionine = N(6),N(6)-dimethyl-L-lysyl-[protein] + S-adenosyl-L-homocysteine + H(+). It carries out the reaction N-terminal glycyl-L-lysyl-L-glutamyl-[protein] + 3 S-adenosyl-L-methionine = N-terminal N,N,N-trimethyl-glycyl-L-lysyl-L-glutamyl-[protein] + 3 S-adenosyl-L-homocysteine + 3 H(+). Dual methyltransferase. It catalyzes N-terminal methylation of target proteins via its C-terminus. It catalyzes dimethylation on lysine residues of target proteins via its N-terminus. This chain is eEF1A lysine and N-terminal methyltransferase homolog, found in Drosophila melanogaster (Fruit fly).